Here is a 399-residue protein sequence, read N- to C-terminus: Tryptophan synthase beta chain (399 aa).

Lys-92 is modified (N6-(pyridoxal phosphate)lysine).

It belongs to the TrpB family. In terms of assembly, tetramer of two alpha and two beta chains. Requires pyridoxal 5'-phosphate as cofactor.

The enzyme catalyses (1S,2R)-1-C-(indol-3-yl)glycerol 3-phosphate + L-serine = D-glyceraldehyde 3-phosphate + L-tryptophan + H2O. The protein operates within amino-acid biosynthesis; L-tryptophan biosynthesis; L-tryptophan from chorismate: step 5/5. The beta subunit is responsible for the synthesis of L-tryptophan from indole and L-serine. The protein is Tryptophan synthase beta chain of Oceanobacillus iheyensis (strain DSM 14371 / CIP 107618 / JCM 11309 / KCTC 3954 / HTE831).